The chain runs to 151 residues: MASSSSRGEMEKMGIDQLKALKEQADLEVNLLQDSLNNIRTATVRLDAAAAALNDLSLRPQGKKMLVPLTASLYVPGTLDEADKVLVDIGTGYFIEKTMDDGKDYCQRKINLLKSNFDQLFEVAAKKKSVADEAGMVLQAKVKQLTAATTS.

Residues 15–35 (IDQLKALKEQADLEVNLLQDS) adopt a coiled-coil conformation.

It belongs to the prefoldin subunit alpha family. As to quaternary structure, heterohexamer of two PFD-alpha type and four PFD-beta type subunits forming prefoldin co-chaperone complex. Interacts with PFD6. Binds to the DELLA protein GAI.

The protein resides in the cytoplasm. It localises to the nucleus. Binds specifically to cytosolic chaperonin (c-CPN) and transfers target proteins to it. Binds to nascent polypeptide chain and promotes folding in an environment in which there are many competing pathways for nonnative proteins. Together with other chaperonins, contribute to the regulation of gene expression by modulating the spliceosome function on pre-mRNA splicing post-transcriptionally by acting as a co-chaperone of Hsp90 to control levels of LSM8. Required for the biogenesis of tubulins and for subsequent microtubules (MTs) organization and dynamicity. Necessary for tolerance to NaCl salt stress. Involved in the process leading to microtubules dissociation in response to gibberellic acid (GA) probably due to the DELLA proteins-mediated translocation of the prefoldin co-chaperone complex from the cytoplasm to the nucleus. Prevents cold acclimation (e.g. 7 days at 4 degrees Celsius) in a DELLA proteins-dependent manner by promoting nuclear proteasome-mediated HY5 degradation, thus modulating the expression of several genes and reducing anthocyanin biosynthesis, but seems not involved in constitutive freezing tolerance. Contributes to the GA-dependent regulation of PIN2 trafficking at the plasma membrane, thus influencing auxin flux. The protein is Prefoldin subunit 5 of Arabidopsis thaliana (Mouse-ear cress).